A 1021-amino-acid polypeptide reads, in one-letter code: Sodium/potassium-transporting ATPase subunit alpha-1 (1021 aa).

Residues 1 to 5 (MGKGG) constitute a propeptide that is removed on maturation. Residues 1-11 (MGKGGGRDKYE) show a composition bias toward basic and acidic residues. A disordered region spans residues 1 to 37 (MGKGGGRDKYEPAAISEHGNKKKAKKERDMDELKKEV). Residues 6–85 (GRDKYEPAAI…NALTPPPTTP (80 aa)) lie on the Cytoplasmic side of the membrane. K9 carries the post-translational modification N6-acetyllysine. A Phosphotyrosine modification is found at Y10. Position 16 is a phosphoserine; by PKC (S16). K21 carries the N6-acetyllysine modification. The span at 26–37 (KERDMDELKKEV) shows a compositional bias: basic and acidic residues. 2 positions are modified to phosphoserine: S38 and S45. Residues 80–82 (PPP) are phosphoinositide-3 kinase binding. Residues 86-106 (EWVKFCRQLFGGFSMLLWIGA) form a helical membrane-spanning segment. Over 107-129 (ILCFLAYGIQAATEEEPQNDNLY) the chain is Extracellular. The chain crosses the membrane as a helical span at residues 130-150 (LGVVLSAVVIITGCFSYYQEA). The Cytoplasmic portion of the chain corresponds to 151 to 286 (KSSKIMESFK…GGQTPIAAEI (136 aa)). The segment at 214 to 233 (SSLTGESEPQTRSPDFTNEN) is disordered. Phosphoserine is present on S226. Phosphotyrosine is present on Y258. A helical membrane pass occupies residues 287–306 (EHFIHIITGVAVFLGVTFFI). Topologically, residues 307 to 318 (LSLILEYTWLEA) are extracellular. The chain crosses the membrane as a helical span at residues 319–336 (VIFLIGIIVANVPEGLLA). Topologically, residues 337–770 (TVTVCLTLTA…EEGRLIFDNL (434 aa)) are cytoplasmic. The 4-aspartylphosphate intermediate role is filled by D374. Residues S450 and S482 each carry the phosphoserine modification. An ATP-binding site is contributed by K485. Y540 is modified (phosphotyrosine). Residues 594–715 (RAAVPDAVGK…QGAIVAVTGD (122 aa)) form a mediates interaction with SCN7A region. K659 carries the N6-succinyllysine modification. Phosphoserine is present on S666. D715 and D719 together coordinate Mg(2+). Residues 771-790 (KKSIAYTLTSNIPEITPFLI) form a helical membrane-spanning segment. Residues 791–800 (FIIANIPLPL) lie on the Extracellular side of the membrane. Residues 801-821 (GTVTILCIDLGTDMVPAISLA) form a helical membrane-spanning segment. The Cytoplasmic portion of the chain corresponds to 822 to 841 (YEQAESDIMKRQPRNPQTDK). Residues 842–864 (LVNERLISMAYGQIGMIQALGGF) form a helical membrane-spanning segment. The Extracellular segment spans residues 865–916 (FTYFVILAENGFLPIHLLGLRVDWDDRWVNDVEDSYGQQWTYEQRKIVEFTC). The chain crosses the membrane as a helical span at residues 917 to 936 (HTAFFVSIVVVQWADLVICK). Topologically, residues 937 to 949 (TRRNSVFQQGMKN) are cytoplasmic. At S941 the chain carries Phosphoserine; by PKA. A helical transmembrane segment spans residues 950-968 (KILIFGLFEETALAAFLSY). At 969–983 (CPGMGVALRMYPLKP) the chain is on the extracellular side. The chain crosses the membrane as a helical span at residues 984-1004 (TWWFCAFPYSLLIFVYDEVRK). Residues 1005–1021 (LIIRRRPGGWVEKETYY) are Cytoplasmic-facing.

It belongs to the cation transport ATPase (P-type) (TC 3.A.3) family. Type IIC subfamily. As to quaternary structure, the sodium/potassium-transporting ATPase is composed of a catalytic alpha subunit, an auxiliary non-catalytic beta subunit and an additional regulatory subunit. Interacts with regulatory subunit FXYD1. Interacts with regulatory subunit FXYD3. Interacts with SIK1. Interacts with SLC35G1 and STIM1. Interacts with CLN3; this interaction regulates the sodium/potassium-transporting ATPase complex localization at the plasma membrane. Interacts with SCN7A; activates ATP1A1 P-type sodium:potassium-exchanging transporter activity which indirectly signals to nearby neurons to regulate sodium homeostasis. In terms of processing, phosphorylation on Tyr-10 modulates pumping activity. Phosphorylation of Ser-941 by PKA modulates the response of ATP1A1 to PKC. Dephosphorylation by protein phosphatase 2A (PP2A) following increases in intracellular sodium, leading to increase catalytic activity.

It is found in the cell membrane. The protein localises to the basolateral cell membrane. The protein resides in the sarcolemma. Its subcellular location is the cell projection. It localises to the axon. It is found in the melanosome. The enzyme catalyses K(+)(out) + Na(+)(in) + ATP + H2O = K(+)(in) + Na(+)(out) + ADP + phosphate + H(+). Its function is as follows. This is the catalytic component of the active enzyme, which catalyzes the hydrolysis of ATP coupled with the exchange of sodium and potassium ions across the plasma membrane. This action creates the electrochemical gradient of sodium and potassium ions, providing the energy for active transport of various nutrients. Could also be part of an osmosensory signaling pathway that senses body-fluid sodium levels and controls salt intake behavior as well as voluntary water intake to regulate sodium homeostasis. The polypeptide is Sodium/potassium-transporting ATPase subunit alpha-1 (ATP1A1) (Equus caballus (Horse)).